The chain runs to 363 residues: Zinc finger CCCH domain-containing protein 53 (363 aa).

The C3H1-type zinc finger occupies K154–P181. The RRM domain maps to K225 to S310. The tract at residues L281–Q348 is disordered. A compositionally biased stretch (low complexity) spans S283–M297. Positions F320–A336 are enriched in polar residues.

The chain is Zinc finger CCCH domain-containing protein 53 from Arabidopsis thaliana (Mouse-ear cress).